The chain runs to 167 residues: 18.8 kDa class II heat shock protein (167 aa).

Residues 49–167 enclose the sHSP domain; that stretch reads DAKAMAATPA…KPKTVEVKVA (119 aa).

The protein belongs to the small heat shock protein (HSP20) family.

It is found in the cytoplasm. In Ipomoea nil (Japanese morning glory), this protein is 18.8 kDa class II heat shock protein (SHSP-2).